The sequence spans 264 residues: MAGEQKPSSNLLEQFILLAKGTSGSALTTLISQVLEAPGVYVFGELLELANVQELAEGANAAYLQLLNLFAYGTYPDYIANKESLPELSVAQQNKLKHLTIVSLASRMKCIPYSVLLKDLEMRNLRELEDLIIEAVYTDIIQGKLDQRNQLLEVDFCIGRDIRKKDINNIVKTLHEWCDGCEAVLLGIEQQVLRANQYKENHHRTQQQVEAEVSNIKKTLKATASSSAQEMEQQLAERECPPHTEQRQPTKKMSKVKGLVSSRH.

Residue Ala-2 is modified to N-acetylalanine. A PCI domain is found at 2-159 (AGEQKPSSNL…QLLEVDFCIG (158 aa)). Positions 194–237 (RANQYKENHHRTQQQVEAEVSNIKKTLKATASSSAQEMEQQLAE) form a coiled coil. Positions 223-232 (TASSSAQEME) are enriched in polar residues. The disordered stretch occupies residues 223–264 (TASSSAQEMEQQLAERECPPHTEQRQPTKKMSKVKGLVSSRH). Residues 235-248 (LAERECPPHTEQRQ) are compositionally biased toward basic and acidic residues.

Belongs to the CSN7/EIF3M family. CSN7 subfamily. Component of the CSN complex, composed of COPS1/GPS1, COPS2, COPS3, COPS4, COPS5, COPS6, COPS7 (COPS7A or COPS7B) and COPS8 and COPS9. In the complex, it probably interacts directly with COPS1, COPS2, COPS4, COPS5, COPS6 and COPS8. Interacts with EIF3S6.

Its subcellular location is the cytoplasm. The protein resides in the nucleus. In terms of biological role, component of the COP9 signalosome complex (CSN), a complex involved in various cellular and developmental processes. The CSN complex is an essential regulator of the ubiquitin (Ubl) conjugation pathway by mediating the deneddylation of the cullin subunits of SCF-type E3 ligase complexes, leading to decrease the Ubl ligase activity of SCF-type complexes such as SCF, CSA or DDB2. The complex is also involved in phosphorylation of p53/TP53, JUN, I-kappa-B-alpha/NFKBIA, ITPK1 and IRF8/ICSBP, possibly via its association with CK2 and PKD kinases. CSN-dependent phosphorylation of TP53 and JUN promotes and protects degradation by the Ubl system, respectively. The polypeptide is COP9 signalosome complex subunit 7b (Cops7b) (Mus musculus (Mouse)).